The chain runs to 406 residues: Tryptophan synthase beta chain (406 aa).

N6-(pyridoxal phosphate)lysine is present on lysine 99.

This sequence belongs to the TrpB family. In terms of assembly, tetramer of two alpha and two beta chains. It depends on pyridoxal 5'-phosphate as a cofactor.

The enzyme catalyses (1S,2R)-1-C-(indol-3-yl)glycerol 3-phosphate + L-serine = D-glyceraldehyde 3-phosphate + L-tryptophan + H2O. The protein operates within amino-acid biosynthesis; L-tryptophan biosynthesis; L-tryptophan from chorismate: step 5/5. Its function is as follows. The beta subunit is responsible for the synthesis of L-tryptophan from indole and L-serine. This is Tryptophan synthase beta chain from Chelativorans sp. (strain BNC1).